The following is a 130-amino-acid chain: MFDISFTELIVIGIVALVVIGPERLPAVARTAGYFLGRARRYIEQVKRDLNEEMELDSLRKLRDSMHETVDSFQNSVHSEINKIQETADTRPAAVPEKESHAVESGGKTEPENTEAAASSTPKEPRQSGS.

A helical transmembrane segment spans residues 1–21 (MFDISFTELIVIGIVALVVIG). Residues 70 to 130 (VDSFQNSVHS…TPKEPRQSGS (61 aa)) form a disordered region. 2 stretches are compositionally biased toward basic and acidic residues: residues 80–89 (EINKIQETAD) and 96–111 (PEKE…KTEP).

This sequence belongs to the TatB family. As to quaternary structure, the Tat system comprises two distinct complexes: a TatABC complex, containing multiple copies of TatA, TatB and TatC subunits, and a separate TatA complex, containing only TatA subunits. Substrates initially bind to the TatABC complex, which probably triggers association of the separate TatA complex to form the active translocon.

Its subcellular location is the cell inner membrane. Part of the twin-arginine translocation (Tat) system that transports large folded proteins containing a characteristic twin-arginine motif in their signal peptide across membranes. Together with TatC, TatB is part of a receptor directly interacting with Tat signal peptides. TatB may form an oligomeric binding site that transiently accommodates folded Tat precursor proteins before their translocation. The protein is Sec-independent protein translocase protein TatB of Nitrosomonas eutropha (strain DSM 101675 / C91 / Nm57).